Here is a 182-residue protein sequence, read N- to C-terminus: DNA-directed RNA polymerase 30 kDa polypeptide (182 aa).

The TFIIS-type zinc finger occupies 135–175; the sequence is STIRCVACKSNNTIPMILQTRSSDEEPTVRVVCKDCGKNFA. Cys-139, Cys-142, Cys-167, and Cys-170 together coordinate Zn(2+).

Belongs to the poxviridae DNA-directed RNA polymerase 30 kDa subunit family. In terms of assembly, this enzyme consists of at least eight subunits.

The catalysed reaction is RNA(n) + a ribonucleoside 5'-triphosphate = RNA(n+1) + diphosphate. Its function is as follows. DNA-dependent RNA polymerase catalyzes the transcription of DNA into RNA using the four ribonucleoside triphosphates as substrates. Rpo30 may have a role in RNA chain elongation. The protein is DNA-directed RNA polymerase 30 kDa polypeptide (RPO30) of Fowlpox virus (strain NVSL) (FPV).